Here is a 140-residue protein sequence, read N- to C-terminus: Putative pre-16S rRNA nuclease (140 aa).

Belongs to the YqgF nuclease family.

Its subcellular location is the cytoplasm. Its function is as follows. Could be a nuclease involved in processing of the 5'-end of pre-16S rRNA. The chain is Putative pre-16S rRNA nuclease from Actinobacillus succinogenes (strain ATCC 55618 / DSM 22257 / CCUG 43843 / 130Z).